The sequence spans 351 residues: Meiotically up-regulated gene 1 protein (351 aa).

The protein resides in the cytoplasm. Functionally, required for correct meiotic chromosome segregation. The sequence is that of Meiotically up-regulated gene 1 protein (mug1) from Schizosaccharomyces pombe (strain 972 / ATCC 24843) (Fission yeast).